Consider the following 360-residue polypeptide: S-adenosylmethionine-dependent nucleotide dehydratase RSAD2 (360 aa).

The tract at residues 44–71 (KGQPRVRGEPKETQETHEDPGSAQPTTP) is disordered. Residues 49-63 (VRGEPKETQETHEDP) are compositionally biased toward basic and acidic residues. The 221-residue stretch at 68-288 (PTTPVSVNYH…LQRHKDVSCL (221 aa)) folds into the Radical SAM core domain. Positions 82, 86, and 89 each coordinate [4Fe-4S] cluster. At Lys-196 the chain carries N6-acetyllysine. Residue Lys-205 forms a Glycyl lysine isopeptide (Lys-Gly) (interchain with G-Cter in ubiquitin) linkage.

It belongs to the radical SAM superfamily. RSAD2 family. Homodimer. Interacts with IRAK1 and TRAF6. Interacts with FPPS. Interacts with HADHB. Interacts (via C-terminus) with VAPA/VAP33 (via C-terminus). Requires [4Fe-4S] cluster as cofactor. In terms of processing, acetylated by HAT1. HAT1-mediated acetylation of Lys-196 in turn recruits UBE4A that stimulates RSAD2 polyubiquitination leading to proteasomal degradation. Post-translationally, 'Lys-6'-linked polyubiquitination at Lys-205 leads to RSAD2 protein degradation. In terms of tissue distribution, in neonatal rat tibia, specifically localized in cells of the periosteum, in osteoblasts lining endosteal and peristeal bone surfaces, to articular surfaces of cartilage and in perichondral cells but not in chondrocytes (at protein level). Expressed predominantly in bone marrow and spleen.

The protein resides in the endoplasmic reticulum membrane. The protein localises to the golgi apparatus. It is found in the endoplasmic reticulum. Its subcellular location is the lipid droplet. It localises to the mitochondrion. The protein resides in the mitochondrion inner membrane. The protein localises to the mitochondrion outer membrane. It catalyses the reaction CTP + AH2 + S-adenosyl-L-methionine = 3'-deoxy-3',4'-didehydro-CTP + 5'-deoxyadenosine + L-methionine + A + H2O + H(+). Its activity is regulated as follows. IRAK1 and TRAF6 synergistically activate RSAD2 increasing its activity with CTP as substrate about 10-fold. Interferon-inducible antiviral protein which plays a major role in the cell antiviral state induced by type I and type II interferon. Catalyzes the conversion of cytidine triphosphate (CTP) to 3'-deoxy-3',4'-didehydro-CTP (ddhCTP) via a SAM-dependent radical mechanism. In turn, ddhCTP acts as a chain terminator for the RNA-dependent RNA polymerases from multiple viruses and directly inhibits viral replication. Therefore, inhibits a wide range of DNA and RNA viruses. Also promotes TLR7 and TLR9-dependent production of IFN-beta production in plasmacytoid dendritic cells (pDCs) by facilitating 'Lys-63'-linked ubiquitination of IRAK1 by TRAF6. Plays a role in CD4+ T-cells activation and differentiation. Facilitates T-cell receptor (TCR)-mediated GATA3 activation and optimal T-helper 2 (Th2) cytokine production by modulating NFKB1 and JUNB activities. Can inhibit secretion of soluble proteins. The sequence is that of S-adenosylmethionine-dependent nucleotide dehydratase RSAD2 from Rattus norvegicus (Rat).